The following is a 24-amino-acid chain: Brevinin-1Bb (24 aa).

Residues Cys18 and Cys24 are joined by a disulfide bond.

Expressed by the skin glands.

The protein localises to the secreted. Functionally, antibacterial activity against Gram-positive bacterium S.aureus and Gram-negative bacterium E.coli. Has activity against C.albicans. This is Brevinin-1Bb from Lithobates berlandieri (Rio Grande leopard frog).